We begin with the raw amino-acid sequence, 651 residues long: Acetyl-coenzyme A synthetase (651 aa).

CoA contacts are provided by residues 189 to 192, Thr-311, and Asn-335; that span reads RGGK. Residues 387–389, 411–416, Asp-500, and Arg-515 each bind ATP; these read GEP and DTWWQT. Ser-523 provides a ligand contact to CoA. Arg-526 contacts ATP. Residues Val-537, His-539, and Val-542 each contribute to the Mg(2+) site. Position 586 (Arg-586) interacts with CoA. The residue at position 611 (Lys-611) is an N6-acetyllysine.

This sequence belongs to the ATP-dependent AMP-binding enzyme family. Mg(2+) serves as cofactor. Post-translationally, acetylated. Deacetylation by the SIR2-homolog deacetylase activates the enzyme.

The catalysed reaction is acetate + ATP + CoA = acetyl-CoA + AMP + diphosphate. In terms of biological role, catalyzes the conversion of acetate into acetyl-CoA (AcCoA), an essential intermediate at the junction of anabolic and catabolic pathways. AcsA undergoes a two-step reaction. In the first half reaction, AcsA combines acetate with ATP to form acetyl-adenylate (AcAMP) intermediate. In the second half reaction, it can then transfer the acetyl group from AcAMP to the sulfhydryl group of CoA, forming the product AcCoA. This is Acetyl-coenzyme A synthetase from Brucella melitensis biotype 1 (strain ATCC 23456 / CCUG 17765 / NCTC 10094 / 16M).